The primary structure comprises 1452 residues: ABC multidrug transporter A (1452 aa).

Residues 1–20 (MNESHEAGKNSSTNVEEREE) form a disordered region. N-linked (GlcNAc...) asparagine glycosylation is found at Asn-2, Asn-10, Asn-228, Asn-287, and Asn-311. Residues 110–363 (LKTLSLARIA…FLQMGFVCPD (254 aa)) enclose the ABC transporter 1 domain. The next 6 helical transmembrane spans lie at 474-494 (VTIS…SIFY), 508-528 (ALLF…MLTL), 554-574 (MIMD…VLYF), 583-603 (GAFF…SMFF), 616-636 (VLPF…FAIP), and 725-745 (IGVI…ATDF). Residues 802 to 1044 (FQWKDVCFDI…ILIDYFVRNG (243 aa)) enclose the ABC transporter 2 domain. 838 to 845 (GVSGAGKT) contacts ATP. The next 5 membrane-spanning stretches (helical) occupy residues 1153–1173 (ALCV…PNTI), 1183–1203 (IFML…HFVA), 1223–1243 (FLIA…VLMF), 1271–1291 (LMIW…IAAF), and 1297–1317 (AGNL…VLAT). Residues Asn-1350, Asn-1365, and Asn-1391 are each glycosylated (N-linked (GlcNAc...) asparagine). A helical membrane pass occupies residues 1418–1438 (FGLMWVFIVFNIFAACSLYWW).

Belongs to the ABC transporter superfamily. ABCG family. PDR (TC 3.A.1.205) subfamily.

Its subcellular location is the membrane. Its function is as follows. ABC transporter that seems not to be involved in the efflux of toxic substances, at least not the classical compounds such as itraconazole, amphotericin B, voriconazole, posaconazole, ravuconazole, or echinocandins. The protein is ABC multidrug transporter A of Aspergillus fumigatus (Neosartorya fumigata).